A 203-amino-acid chain; its full sequence is Peptidyl-tRNA hydrolase (203 aa).

Residue Y16 participates in tRNA binding. The active-site Proton acceptor is the H21. Positions 68, 70, and 116 each coordinate tRNA.

It belongs to the PTH family. Monomer.

Its subcellular location is the cytoplasm. The catalysed reaction is an N-acyl-L-alpha-aminoacyl-tRNA + H2O = an N-acyl-L-amino acid + a tRNA + H(+). Functionally, hydrolyzes ribosome-free peptidyl-tRNAs (with 1 or more amino acids incorporated), which drop off the ribosome during protein synthesis, or as a result of ribosome stalling. Its function is as follows. Catalyzes the release of premature peptidyl moieties from peptidyl-tRNA molecules trapped in stalled 50S ribosomal subunits, and thus maintains levels of free tRNAs and 50S ribosomes. In Nostoc sp. (strain PCC 7120 / SAG 25.82 / UTEX 2576), this protein is Peptidyl-tRNA hydrolase.